The primary structure comprises 246 residues: NLP effector protein 2 (246 aa).

An N-terminal signal peptide occupies residues 1–19 (MKFVVFLCAIAAVVATIQG). Positions 113–123 (AIMYSWYFPKD) match the Conserved undecapeptide motif I motif. A Hepta-peptide GHRHDWE motif II motif is present at residues 130–136 (GHRHDWE).

Belongs to the Necrosis inducing protein (NPP1) family.

The protein resides in the secreted. Its function is as follows. Secreted effector that contributes strongly to virulence during infection by P.capsici. Causes large necrotic areas in both host C.annuum and non-host N.benthamiana. The sequence is that of NLP effector protein 2 from Phytophthora capsici.